The sequence spans 621 residues: MYRSMAILSSLRHAYSQISTRSYLSRSKVGFSSNLSSPLDSFAIVPSRFLWKFRTFSSKPDSMLQLVLENDWSKEVEEGLRKPDMSLTHETAIYVLRKLEKYPEKAYYFLDWVLRDSGLSPSTPLYSIMLRILVQQRSMKRFWMTLREMKQGGFYLDEDTYKTIYGELSKEKSKADAVAVAHFYERMLKENAMSVVAGEVSAVVTKGDWSCEVERELQEMKLVLSDNFVIRVLKELREHPLKALAFFHWVGGGGSSSGYQHSTVTYNAALRVLARPNSVAEFWSVVDEMKTAGYDMDLDTYIKVSRQFQKSRMMAETVKLYEYMMDGPFKPSIQDCSLLLRYLSGSPNPDLDLVFRVSRKYESTGKSLSKAVYDGIHRSLTSVGRFDEAEEITKAMRNAGYEPDNITYSQLVFGLCKAKRLEEARGVLDQMEAQGCFPDIKTWTILIQGHCKNNELDKALACFANMLEKGFDIDSNLLDVLIDGFVIHNKFEGASIFLMEMVKNANVKPWQSTYKLLIDKLLKIKKSEEALDLLQMMKKQNYPAYAEAFDGYLAKFGTLEDAKKFLDVLSSKDSPSFAAYFHVIEAFYREGRLTDAKNLLFICPHHFKTHPKISELFGAAA.

The N-terminal 67 residues, 1–67 (MYRSMAILSS…SKPDSMLQLV (67 aa)), are a transit peptide targeting the chloroplast. PPR repeat units follow at residues 122-156 (STPL…GFYL), 157-194 (DEDT…NAMS), 262-296 (STVT…GYDM), 297-331 (DLDT…PFKP), 332-368 (SIQD…GKSL), 369-403 (SKAV…GYEP), 404-438 (DNIT…GCFP), 439-473 (DIKT…GFDI), 474-509 (DSNL…NVKP), and 510-544 (WQST…NYPA).

This sequence belongs to the PPR family. P subfamily.

The protein localises to the plastid. Its subcellular location is the chloroplast. The protein is Pentatricopeptide repeat-containing protein At3g48250, chloroplastic of Arabidopsis thaliana (Mouse-ear cress).